We begin with the raw amino-acid sequence, 632 residues long: Extracellular metalloproteinase 1 (632 aa).

The N-terminal stretch at 1–19 (MHGLLLAAGLISLPLHVLA) is a signal peptide. Positions 20-246 (HPQPSSTSLA…VVDYVAHATF (227 aa)) are excised as a propeptide. Asparagine 284 carries an N-linked (GlcNAc...) asparagine glycan. Position 430 (threonine 430) interacts with Zn(2+). Histidine 431 is an active-site residue. A Zn(2+)-binding site is contributed by serine 434. Asparagine 591 carries an N-linked (GlcNAc...) asparagine glycan.

The protein belongs to the peptidase M36 family. The cofactor is Zn(2+).

It is found in the secreted. Its activity is regulated as follows. PMSF, soybean trypsin inhibitor (SBTI) and chymostatin strongly inhibit the proteinase. In terms of biological role, secreted metalloproteinase probably acting as a virulence factor. This Arthroderma otae (Microsporum canis) protein is Extracellular metalloproteinase 1 (MEP1).